We begin with the raw amino-acid sequence, 243 residues long: Geranylgeranylglyceryl phosphate synthase (243 aa).

Residues aspartate 22 and serine 51 each contribute to the Mg(2+) site. Residues 170–176, 201–202, and 223–224 each bind sn-glycerol 1-phosphate; these read YLESGSG, GG, and GT.

The protein belongs to the GGGP/HepGP synthase family. Group II subfamily. Mg(2+) serves as cofactor.

The protein resides in the cytoplasm. The enzyme catalyses sn-glycerol 1-phosphate + (2E,6E,10E)-geranylgeranyl diphosphate = sn-3-O-(geranylgeranyl)glycerol 1-phosphate + diphosphate. Its pathway is membrane lipid metabolism; glycerophospholipid metabolism. Functionally, prenyltransferase that catalyzes the transfer of the geranylgeranyl moiety of geranylgeranyl diphosphate (GGPP) to the C3 hydroxyl of sn-glycerol-1-phosphate (G1P). This reaction is the first ether-bond-formation step in the biosynthesis of archaeal membrane lipids. The protein is Geranylgeranylglyceryl phosphate synthase of Picrophilus torridus (strain ATCC 700027 / DSM 9790 / JCM 10055 / NBRC 100828 / KAW 2/3).